The primary structure comprises 418 residues: Tyrosine--tRNA ligase (418 aa).

Y34 contributes to the L-tyrosine binding site. Positions 39–48 (PTADSLHLGH) match the 'HIGH' region motif. The L-tyrosine site is built by Y169 and Q173. The 'KMSKS' region motif lies at 229–233 (KFGKS). Residue K232 participates in ATP binding. An S4 RNA-binding domain is found at 352 to 418 (LNIVELLVNA…GKKKNFVLTY (67 aa)).

Belongs to the class-I aminoacyl-tRNA synthetase family. TyrS type 1 subfamily. In terms of assembly, homodimer.

The protein resides in the cytoplasm. The catalysed reaction is tRNA(Tyr) + L-tyrosine + ATP = L-tyrosyl-tRNA(Tyr) + AMP + diphosphate + H(+). In terms of biological role, catalyzes the attachment of tyrosine to tRNA(Tyr) in a two-step reaction: tyrosine is first activated by ATP to form Tyr-AMP and then transferred to the acceptor end of tRNA(Tyr). This Streptococcus thermophilus (strain ATCC BAA-491 / LMD-9) protein is Tyrosine--tRNA ligase.